Reading from the N-terminus, the 59-residue chain is Large ribosomal subunit protein uL30 (59 aa).

Belongs to the universal ribosomal protein uL30 family. As to quaternary structure, part of the 50S ribosomal subunit.

The sequence is that of Large ribosomal subunit protein uL30 from Aliivibrio salmonicida (strain LFI1238) (Vibrio salmonicida (strain LFI1238)).